Here is a 236-residue protein sequence, read N- to C-terminus: Methylosome subunit pICln (236 aa).

The segment at 1-20 is disordered; sequence MSFLKSFPPPGPTEGLRHQQ. N-acetylserine is present on Ser-2. Phosphoserine occurs at positions 101, 143, 192, 194, 197, and 209. Thr-222 carries the post-translational modification Phosphothreonine.

This sequence belongs to the pICln (TC 1.A.47) family. Component of the methylosome, a 20S complex containing at least PRMT5/SKB1, WDR77/MEP50 and CLNS1A/pICln. May mediate SNRPD1 and SNRPD3 methylation. Forms a 6S pICln-Sm complex composed of CLNS1A/pICln, SNRPD1, SNRPD2, SNRPE, SNRPF and SNRPG; ring-like structure where CLNS1A/pICln mimics additional Sm proteins and which is unable to assemble into the core snRNP. Interacts with LSM10 and LSM11. In terms of tissue distribution, widely distributed but expressed more abundantly in nonpigmented ciliary epithelial cells than in pigmented ones.

Its subcellular location is the cytoplasm. It is found in the cytosol. It localises to the nucleus. The protein resides in the cytoskeleton. Functionally, involved in both the assembly of spliceosomal snRNPs and the methylation of Sm proteins. Chaperone that regulates the assembly of spliceosomal U1, U2, U4 and U5 small nuclear ribonucleoproteins (snRNPs), the building blocks of the spliceosome, and thereby plays an important role in the splicing of cellular pre-mRNAs. Most spliceosomal snRNPs contain a common set of Sm proteins SNRPB, SNRPD1, SNRPD2, SNRPD3, SNRPE, SNRPF and SNRPG that assemble in a heptameric protein ring on the Sm site of the small nuclear RNA to form the core snRNP (Sm core). In the cytosol, the Sm proteins SNRPD1, SNRPD2, SNRPE, SNRPF and SNRPG are trapped in an inactive 6S pICln-Sm complex by the chaperone CLNS1A that controls the assembly of the core snRNP. Dissociation by the SMN complex of CLNS1A from the trapped Sm proteins and their transfer to an SMN-Sm complex triggers the assembly of core snRNPs and their transport to the nucleus. The chain is Methylosome subunit pICln (CLNS1A) from Oryctolagus cuniculus (Rabbit).